Consider the following 349-residue polypeptide: Isopentenyl-diphosphate delta-isomerase (349 aa).

5–6 (RK) lines the substrate pocket. FMN is bound by residues serine 61, 62-64 (SMT), serine 92, and asparagine 120. Residue 92–94 (SMR) participates in substrate binding. A substrate-binding site is contributed by glutamine 159. Position 160 (glutamate 160) interacts with Mg(2+). FMN is bound by residues lysine 189, threonine 219, 269–271 (GLR), and 290–291 (AR).

The protein belongs to the IPP isomerase type 2 family. In terms of assembly, homooctamer. Dimer of tetramers. FMN is required as a cofactor. The cofactor is NADPH. It depends on Mg(2+) as a cofactor.

The protein localises to the cytoplasm. The catalysed reaction is isopentenyl diphosphate = dimethylallyl diphosphate. In terms of biological role, involved in the biosynthesis of isoprenoids. Catalyzes the 1,3-allylic rearrangement of the homoallylic substrate isopentenyl (IPP) to its allylic isomer, dimethylallyl diphosphate (DMAPP). This Picrophilus torridus (strain ATCC 700027 / DSM 9790 / JCM 10055 / NBRC 100828 / KAW 2/3) protein is Isopentenyl-diphosphate delta-isomerase.